A 457-amino-acid polypeptide reads, in one-letter code: Siroheme synthase (457 aa).

The segment at 1–204 (MDHLPIFCQL…ADEKAVNATT (204 aa)) is precorrin-2 dehydrogenase /sirohydrochlorin ferrochelatase. NAD(+)-binding positions include 22-23 (DV) and 43-44 (LN). A Phosphoserine modification is found at S128. The tract at residues 216–457 (GEVVLVGAGP…RDKLNWFSNH (242 aa)) is uroporphyrinogen-III C-methyltransferase. P225 lines the S-adenosyl-L-methionine pocket. The active-site Proton acceptor is the D248. The Proton donor role is filled by K270. S-adenosyl-L-methionine-binding positions include 301-303 (GGD), I306, 331-332 (TA), M382, and G411.

It in the N-terminal section; belongs to the precorrin-2 dehydrogenase / sirohydrochlorin ferrochelatase family. The protein in the C-terminal section; belongs to the precorrin methyltransferase family.

The enzyme catalyses uroporphyrinogen III + 2 S-adenosyl-L-methionine = precorrin-2 + 2 S-adenosyl-L-homocysteine + H(+). It catalyses the reaction precorrin-2 + NAD(+) = sirohydrochlorin + NADH + 2 H(+). The catalysed reaction is siroheme + 2 H(+) = sirohydrochlorin + Fe(2+). It functions in the pathway cofactor biosynthesis; adenosylcobalamin biosynthesis; precorrin-2 from uroporphyrinogen III: step 1/1. The protein operates within cofactor biosynthesis; adenosylcobalamin biosynthesis; sirohydrochlorin from precorrin-2: step 1/1. It participates in porphyrin-containing compound metabolism; siroheme biosynthesis; precorrin-2 from uroporphyrinogen III: step 1/1. Its pathway is porphyrin-containing compound metabolism; siroheme biosynthesis; siroheme from sirohydrochlorin: step 1/1. It functions in the pathway porphyrin-containing compound metabolism; siroheme biosynthesis; sirohydrochlorin from precorrin-2: step 1/1. Its function is as follows. Multifunctional enzyme that catalyzes the SAM-dependent methylations of uroporphyrinogen III at position C-2 and C-7 to form precorrin-2 via precorrin-1. Then it catalyzes the NAD-dependent ring dehydrogenation of precorrin-2 to yield sirohydrochlorin. Finally, it catalyzes the ferrochelation of sirohydrochlorin to yield siroheme. The chain is Siroheme synthase from Salmonella paratyphi A (strain ATCC 9150 / SARB42).